The following is a 515-amino-acid chain: 2-isopropylmalate synthase (515 aa).

A Pyruvate carboxyltransferase domain is found at 4–266; that stretch reads IKFFDTTLRD…ETRLNLQEIK (263 aa). Mn(2+)-binding residues include aspartate 13, histidine 201, histidine 203, and asparagine 237. The regulatory domain stretch occupies residues 391–515; the sequence is QLSSIQVQYG…RAENEKVATS (125 aa).

Belongs to the alpha-IPM synthase/homocitrate synthase family. LeuA type 1 subfamily. Homodimer. The cofactor is Mn(2+).

It localises to the cytoplasm. It carries out the reaction 3-methyl-2-oxobutanoate + acetyl-CoA + H2O = (2S)-2-isopropylmalate + CoA + H(+). It participates in amino-acid biosynthesis; L-leucine biosynthesis; L-leucine from 3-methyl-2-oxobutanoate: step 1/4. In terms of biological role, catalyzes the condensation of the acetyl group of acetyl-CoA with 3-methyl-2-oxobutanoate (2-ketoisovalerate) to form 3-carboxy-3-hydroxy-4-methylpentanoate (2-isopropylmalate). The polypeptide is 2-isopropylmalate synthase (Geobacillus stearothermophilus (Bacillus stearothermophilus)).